Here is a 133-residue protein sequence, read N- to C-terminus: Ribonuclease P protein component (133 aa).

Residues 114-133 (RSRPTPEEKSEPAGVDSTDA) are disordered.

It belongs to the RnpA family. In terms of assembly, consists of a catalytic RNA component (M1 or rnpB) and a protein subunit.

It carries out the reaction Endonucleolytic cleavage of RNA, removing 5'-extranucleotides from tRNA precursor.. RNaseP catalyzes the removal of the 5'-leader sequence from pre-tRNA to produce the mature 5'-terminus. It can also cleave other RNA substrates such as 4.5S RNA. The protein component plays an auxiliary but essential role in vivo by binding to the 5'-leader sequence and broadening the substrate specificity of the ribozyme. This Pseudomonas syringae pv. tomato (strain ATCC BAA-871 / DC3000) protein is Ribonuclease P protein component.